The primary structure comprises 317 residues: Petrobactin-binding protein YclQ (317 aa).

The N-terminal stretch at 1–19 (MKKFALLFIALVTAVVISA) is a signal peptide. Cys-20 carries N-palmitoyl cysteine lipidation. The S-diacylglycerol cysteine moiety is linked to residue Cys-20. Residues 56-317 (KVVVFDFGSL…IKEVKDGLEK (262 aa)) enclose the Fe/B12 periplasmic-binding domain.

This sequence belongs to the bacterial solute-binding protein 8 family. The complex is composed of two ATP-binding proteins (YclP), two transmembrane proteins (YclN and YclO) and a solute-binding protein (YclQ). Interacts with FloT.

It is found in the cell membrane. The protein resides in the membrane raft. Its function is as follows. Part of the ABC transporter complex YclNOPQ involved in uptake of ferric-petrobactin. Petrobactin is a photoreactive 3,4-catecholate siderophore produced by many members of the B.cereus group, including B.anthracis. Binds selectively iron-free and ferric petrobactin and the petrobactin precursor 3,4-dihydroxybenzoic acid (3,4-DHB). This chain is Petrobactin-binding protein YclQ (yclQ), found in Bacillus subtilis (strain 168).